Consider the following 380-residue polypeptide: Shaggy-related protein kinase eta (380 aa).

The 285-residue stretch at 40–324 (YMAERVVGTG…ALEACAHPFF (285 aa)) folds into the Protein kinase domain. Residues 46–54 (VGTGSFGIV) and Lys69 contribute to the ATP site. Thr104 bears the Phosphothreonine mark. Ser105 is modified (phosphoserine). Residue Asp165 is the Proton acceptor of the active site. Position 187 is a phosphoserine (Ser187). Tyr200 is subject to Phosphotyrosine. Thr220 and Thr261 each carry phosphothreonine. Ser310 bears the Phosphoserine mark. Thr314 is modified (phosphothreonine). Position 353 is a phosphoserine (Ser353).

It belongs to the protein kinase superfamily. CMGC Ser/Thr protein kinase family. GSK-3 subfamily. Interacts in vitro with the C-terminal fragment of BZR1 and with BES1/BZR2, but not through the kinase domain. Interacts with BHLH150, beet curly top virus AL4/C4 and tomato golden mosaic virus AL4/AC4. Interacts with YDA. Interacts with MKK4. Interacts with KIB1 and KIB2 in a brassinosteroid (BR)-dependent manner. Interacts with BSK1, BSK6, BSK8 and BSK11. Binds to WRKY46, WRKY54 and WRKY70. Component of a complex made of POLAR, BASL, ASK7/BIN2 and ASK3/SK12. Binds to POLAR and BASL. Post-translationally, autophosphorylated mainly on threonine and serine residues. Ubiquitination and subsequent proteasomal degradation mediated by KIB1. In the two outer cell layers of the developing seed coat and restricted to the suspensor cells in developing embryos. Mostly expressed in stomatal lineage cells with asymmetric cell division (ACD) potential. Observed in small cells of non-protruding hypocotyl cell files and of developing cotyledon epidermis.

The protein resides in the cytoplasm. It localises to the cell cortex. It is found in the nucleus. The protein localises to the cell membrane. It carries out the reaction L-seryl-[protein] + ATP = O-phospho-L-seryl-[protein] + ADP + H(+). It catalyses the reaction L-threonyl-[protein] + ATP = O-phospho-L-threonyl-[protein] + ADP + H(+). With respect to regulation, inactivated by an unknown mechanism after binding of brassinosteroids to the brassinosteroid receptor complex. Inhibited by lithium. Inhibited by dephosphorylation at Tyr-200 by BSU1. Competitive inhibition by KIB1 that reduces substrate (e.g. BZR1) access. Repressed by bikinin. Its function is as follows. Negative regulator in brassinosteroid signal transduction pathway important for plant growth. May be also involved in auxin signaling pathway. Phosphorylates and increases the degradation of BZR1 and BZR2/BES1 by the proteasome. Phosphorylates BHLH150, beet curly top virus C4 and tomato golden mosaic virus AC4 on threonine and serine residues. Upon brassinosteroid signaling, inhibits stomatal development by phosphorylating and inhibiting the MAPKK kinase YDA and the MAPK kinases MKK4 and MKK5. Phosphorylates BSK1, BSK3, BSK5, BSK6, BSK8 and BSK11 in vitro. Phoyphorylates and destabilizes WRKY46, WRKY54 and WRKY70. Mediates BASL nuclear exclusion; kinase activity is required for this function. Required first at the cortical polarity site, to restrict MAPK signaling and promote asymmetric cell division (ACD), and second in the nucleus of stomatal lineage ground cells (SLGCs) or meristemoids, to limit cell division and to promote differentiation into pavement or stomatal guard cells, respectively, likely by initiating BASL polarization. Phosphorylates BASL, YDA and SPCH in vitro and POLAR in vivo. Phosphorylates and inhibits SPCH in the nucleus of SLGC undergoing ACD, thus negatively regulating stomatal development. The polypeptide is Shaggy-related protein kinase eta (Arabidopsis thaliana (Mouse-ear cress)).